The primary structure comprises 116 residues: Protein Rev (116 aa).

Phosphoserine; by host CK2 occurs at positions 5 and 8. The tract at residues 18-26 (LIKFLYQSN) is homomultimerization. A disordered region spans residues 23 to 48 (YQSNPPPKPEGTRQARRNRRRRWRER). The short motif at 34–50 (TRQARRNRRRRWRERQR) is the Nuclear localization signal and RNA-binding (RRE) element. Basic residues predominate over residues 36–47 (QARRNRRRRWRE). The Nuclear export signal and binding to XPO1 signature appears at 73–84 (LQLPPLERLTLD). S92 and S99 each carry phosphoserine; by host. Positions 92–116 (SGTQGVGSPQILVESPTVLESGTKE) are disordered.

Belongs to the HIV-1 REV protein family. As to quaternary structure, homomultimer; when bound to the RRE. Multimeric assembly is essential for activity and may involve XPO1. Binds to human KPNB1, XPO1, TNPO1, RANBP5 and IPO7. Interacts with the viral Integrase. Interacts with human KHDRBS1. Interacts with human NAP1; this interaction decreases Rev multimerization and stimulates its activity. Interacts with human DEAD-box helicases DDX3 and DDX24; these interactions may serve for viral RNA export to the cytoplasm and packaging, respectively. Interacts with human PSIP1; this interaction may inhibit HIV-1 DNA integration by promoting dissociation of the Integrase-LEDGF/p75 complex. Post-translationally, asymmetrically arginine dimethylated at one site by host PRMT6. Methylation impairs the RNA-binding activity and export of viral RNA from the nucleus to the cytoplasm. In terms of processing, phosphorylated by protein kinase CK2. Presence of, and maybe binding to the N-terminus of the regulatory beta subunit of CK2 is necessary for CK2-mediated Rev's phosphorylation.

The protein localises to the host nucleus. It localises to the host nucleolus. The protein resides in the host cytoplasm. Escorts unspliced or incompletely spliced viral pre-mRNAs (late transcripts) out of the nucleus of infected cells. These pre-mRNAs carry a recognition sequence called Rev responsive element (RRE) located in the env gene, that is not present in fully spliced viral mRNAs (early transcripts). This function is essential since most viral proteins are translated from unspliced or partially spliced pre-mRNAs which cannot exit the nucleus by the pathway used by fully processed cellular mRNAs. Rev itself is translated from a fully spliced mRNA that readily exits the nucleus. Rev's nuclear localization signal (NLS) binds directly to KPNB1/Importin beta-1 without previous binding to KPNA1/Importin alpha-1. KPNB1 binds to the GDP bound form of RAN (Ran-GDP) and targets Rev to the nucleus. In the nucleus, the conversion from Ran-GDP to Ran-GTP dissociates Rev from KPNB1 and allows Rev's binding to the RRE in viral pre-mRNAs. Rev multimerization on the RRE via cooperative assembly exposes its nuclear export signal (NES) to the surface. Rev can then form a complex with XPO1/CRM1 and Ran-GTP, leading to nuclear export of the complex. Conversion from Ran-GTP to Ran-GDP mediates dissociation of the Rev/RRE/XPO1/RAN complex, so that Rev can return to the nucleus for a subsequent round of export. Beside KPNB1, also seems to interact with TNPO1/Transportin-1, RANBP5/IPO5 and IPO7/RANBP7 for nuclear import. The nucleoporin-like HRB/RIP is an essential cofactor that probably indirectly interacts with Rev to release HIV RNAs from the perinuclear region to the cytoplasm. The polypeptide is Protein Rev (Human immunodeficiency virus type 1 group M subtype B (isolate SC) (HIV-1)).